We begin with the raw amino-acid sequence, 207 residues long: Large ribosomal subunit protein uL4 (207 aa).

A disordered region spans residues 49–78; the sequence is HAVKNRSAVSGGGRKPWRQKGTGRARQGSI.

Belongs to the universal ribosomal protein uL4 family. Part of the 50S ribosomal subunit.

One of the primary rRNA binding proteins, this protein initially binds near the 5'-end of the 23S rRNA. It is important during the early stages of 50S assembly. It makes multiple contacts with different domains of the 23S rRNA in the assembled 50S subunit and ribosome. Functionally, forms part of the polypeptide exit tunnel. The chain is Large ribosomal subunit protein uL4 from Streptococcus uberis (strain ATCC BAA-854 / 0140J).